Here is a 167-residue protein sequence, read N- to C-terminus: Putative ripening-related protein 6 (167 aa).

Positions 1-23 are cleaved as a signal peptide; sequence MANAKQLALFAMLVLLLASCAAA. Residues 28–57 are disordered; that stretch reads KPDPCDGGGGGVDSHLPPGMRRCSSPAVSE.

It belongs to the kiwellin family.

The protein localises to the secreted. The sequence is that of Putative ripening-related protein 6 from Oryza sativa subsp. japonica (Rice).